The sequence spans 346 residues: UDP-3-O-acylglucosamine N-acyltransferase (346 aa).

His-253 serves as the catalytic Proton acceptor.

The protein belongs to the transferase hexapeptide repeat family. LpxD subfamily. As to quaternary structure, homotrimer.

It carries out the reaction a UDP-3-O-[(3R)-3-hydroxyacyl]-alpha-D-glucosamine + a (3R)-hydroxyacyl-[ACP] = a UDP-2-N,3-O-bis[(3R)-3-hydroxyacyl]-alpha-D-glucosamine + holo-[ACP] + H(+). Its pathway is bacterial outer membrane biogenesis; LPS lipid A biosynthesis. In terms of biological role, catalyzes the N-acylation of UDP-3-O-acylglucosamine using 3-hydroxyacyl-ACP as the acyl donor. Is involved in the biosynthesis of lipid A, a phosphorylated glycolipid that anchors the lipopolysaccharide to the outer membrane of the cell. The chain is UDP-3-O-acylglucosamine N-acyltransferase from Rickettsia akari (strain Hartford).